The primary structure comprises 484 residues: Sperm motility kinase 2B (484 aa).

The Protein kinase domain maps to Tyr8–Val256. Residues Ile14–Val22 and Lys37 each bind ATP. The active-site Proton acceptor is the Asp127. Residues Pro272–Lys314 form the UBA domain. Polar residues-rich tracts occupy residues Pro356–Ser373 and Ser422–Ser434. 2 disordered regions span residues Pro356 to His400 and Ser422 to Lys450.

The protein belongs to the protein kinase superfamily. CAMK Ser/Thr protein kinase family. Smok subfamily. As to expression, testis-specific. Expressed in the testis from 22 days postpartum (22 dpp).

It carries out the reaction L-seryl-[protein] + ATP = O-phospho-L-seryl-[protein] + ADP + H(+). The catalysed reaction is L-threonyl-[protein] + ATP = O-phospho-L-threonyl-[protein] + ADP + H(+). In terms of biological role, may play a role in sperm motility, especially in the regulation of flagellar function. The protein is Sperm motility kinase 2B of Mus musculus (Mouse).